The chain runs to 489 residues: Putative (R)-citramalate synthase CimA (489 aa).

Positions valine 3–tyrosine 255 constitute a Pyruvate carboxyltransferase domain.

It belongs to the alpha-IPM synthase/homocitrate synthase family. As to quaternary structure, homodimer.

The enzyme catalyses pyruvate + acetyl-CoA + H2O = (3R)-citramalate + CoA + H(+). It participates in amino-acid biosynthesis; L-isoleucine biosynthesis; 2-oxobutanoate from pyruvate: step 1/3. In terms of biological role, catalyzes the condensation of pyruvate and acetyl-coenzyme A to form (R)-citramalate. This chain is Putative (R)-citramalate synthase CimA (cimA), found in Archaeoglobus fulgidus (strain ATCC 49558 / DSM 4304 / JCM 9628 / NBRC 100126 / VC-16).